The primary structure comprises 501 residues: Capsid protein (501 aa).

Residues 78–98 (SEEGFPVEPKTEEKDIPSTSG) form a disordered region. The short motif at 122-125 (KRGF) is the Nuclear localization signal element. A CCHC-type zinc finger spans residues 431-448 (CKCWICHEEGHYANECPK).

The protein belongs to the caulimoviridae capsid protein family. As to quaternary structure, interacts (via nuclear localization signal) with host importin alpha.

The protein localises to the virion. The protein resides in the host nucleus. In terms of biological role, self assembles to form an icosahedral capsid, about 50 nm in diameter, nm, composed of 420 subunits of the viral capsid protein. The capsid encapsulates the genomic dsDNA. Following virus entry into host cell, provides nuclear import of the viral genome. Virus particles do not enter the nucleus, but dock at the nuclear membrane through the interaction with host importins. The chain is Capsid protein from Cestrum parqui (CmYLCV).